We begin with the raw amino-acid sequence, 82 residues long: Small ribosomal subunit protein bS18 (82 aa).

Residues 1–20 (MSETSSAPVRRPFHRRRKTC) form a disordered region.

Belongs to the bacterial ribosomal protein bS18 family. In terms of assembly, part of the 30S ribosomal subunit. Forms a tight heterodimer with protein bS6.

In terms of biological role, binds as a heterodimer with protein bS6 to the central domain of the 16S rRNA, where it helps stabilize the platform of the 30S subunit. This chain is Small ribosomal subunit protein bS18, found in Rhizobium johnstonii (strain DSM 114642 / LMG 32736 / 3841) (Rhizobium leguminosarum bv. viciae).